The chain runs to 298 residues: Rhodomycin D methylesterase DnrP (298 aa).

The AB hydrolase-1 domain maps to 25 to 277 (PLLLIAGGNL…VEIENMGHAL (253 aa)).

The protein belongs to the methyl esterase DnrP family.

It carries out the reaction rhodomycin D + H2O = 10-carboxy-13-deoxycarminomycin + methanol + H(+). The catalysed reaction is 4-O-methylrhodomycin D + H2O = 10-carboxy-13-deoxydaunorubicin + methanol + H(+). It participates in antibiotic biosynthesis; daunorubicin biosynthesis. Its pathway is antibiotic biosynthesis; carminomycin biosynthesis. In terms of biological role, involved in the biosynthesis of the anthracyclines carminomycin and daunorubicin (daunomycin) which are aromatic polyketide antibiotics that exhibit high cytotoxicity and are widely applied in the chemotherapy of a variety of cancers. Catalyzes the removal of methyl group from the carbomethoxy group of rhodomycin D (10-carbomethoxy-13-deoxycarminomycin) and 4-O-methylrhodomycin D to yield 10-carboxy-13-deoxycarminomycin and 10-carboxy-13-deoxydaunorubicin, respectively. Could be also involved in the decarboxylation of 10-carboxy-13-deoxycarminomycin and 10-carboxy-13-deoxydaunorubicin to yield 13-deoxycarminomycin and 13-deoxydaunorubicin, respectively. It seems that DnrK may influence the ability of DnrP to carry out the decarboxylation. The protein is Rhodomycin D methylesterase DnrP (dnrP) of Streptomyces peucetius.